A 153-amino-acid polypeptide reads, in one-letter code: Endoribonuclease YbeY (153 aa).

Positions 115, 119, and 125 each coordinate Zn(2+).

The protein belongs to the endoribonuclease YbeY family. Zn(2+) serves as cofactor.

It localises to the cytoplasm. Single strand-specific metallo-endoribonuclease involved in late-stage 70S ribosome quality control and in maturation of the 3' terminus of the 16S rRNA. This Blochmanniella floridana protein is Endoribonuclease YbeY.